The chain runs to 409 residues: Imidazolonepropionase (409 aa).

Fe(3+)-binding residues include histidine 70 and histidine 72. Zn(2+) is bound by residues histidine 70 and histidine 72. Positions 79, 137, and 164 each coordinate 4-imidazolone-5-propanoate. An N-formimidoyl-L-glutamate-binding site is contributed by tyrosine 137. Histidine 225 serves as a coordination point for Fe(3+). Residue histidine 225 coordinates Zn(2+). Position 228 (glutamine 228) interacts with 4-imidazolone-5-propanoate. Asparagine 314 and glycine 316 together coordinate N-formimidoyl-L-glutamate. Threonine 317 lines the 4-imidazolone-5-propanoate pocket.

It belongs to the metallo-dependent hydrolases superfamily. HutI family. It depends on Zn(2+) as a cofactor. Fe(3+) serves as cofactor.

It localises to the cytoplasm. It catalyses the reaction 4-imidazolone-5-propanoate + H2O = N-formimidoyl-L-glutamate. It participates in amino-acid degradation; L-histidine degradation into L-glutamate; N-formimidoyl-L-glutamate from L-histidine: step 3/3. Its function is as follows. Catalyzes the hydrolytic cleavage of the carbon-nitrogen bond in imidazolone-5-propanoate to yield N-formimidoyl-L-glutamate. It is the third step in the universal histidine degradation pathway. This Paenarthrobacter aurescens (strain TC1) protein is Imidazolonepropionase.